Reading from the N-terminus, the 37-residue chain is Large ribosomal subunit protein bL36 (37 aa).

Belongs to the bacterial ribosomal protein bL36 family.

This Alkalilimnicola ehrlichii (strain ATCC BAA-1101 / DSM 17681 / MLHE-1) protein is Large ribosomal subunit protein bL36.